The primary structure comprises 152 residues: Cell division protein SepF (152 aa).

The tract at residues 25 to 54 (EEREPVQEEKGTKDKAAFQERPQTGKQNVV) is disordered. Residues 28-42 (EPVQEEKGTKDKAAF) are compositionally biased toward basic and acidic residues.

This sequence belongs to the SepF family. Homodimer. Interacts with FtsZ.

Its subcellular location is the cytoplasm. Cell division protein that is part of the divisome complex and is recruited early to the Z-ring. Probably stimulates Z-ring formation, perhaps through the cross-linking of FtsZ protofilaments. Its function overlaps with FtsA. The chain is Cell division protein SepF from Bacillus pumilus (strain SAFR-032).